We begin with the raw amino-acid sequence, 556 residues long: U-box domain-containing protein 38 (556 aa).

Residues 1–34 (MGKNGRLRWNPFSHRSSSSTSSSSRQQQQEQQPP) form a disordered region. Residues 13-32 (SHRSSSSTSSSSRQQQQEQQ) are compositionally biased toward low complexity. In terms of domain architecture, U-box spans 32-108 (QPPVEFLCPI…DTWCDTVGVS (77 aa)). ARM repeat units follow at residues 256–295 (DEAR…NLSL), 297–336 (KKNK…SLSL), 338–378 (DDNK…HLTL), 380–417 (QTNR…NLAC), and 418–468 (CSEG…ALSH).

Binds to SD16, SD17, SD18 and SD129.

The catalysed reaction is S-ubiquitinyl-[E2 ubiquitin-conjugating enzyme]-L-cysteine + [acceptor protein]-L-lysine = [E2 ubiquitin-conjugating enzyme]-L-cysteine + N(6)-ubiquitinyl-[acceptor protein]-L-lysine.. The protein operates within protein modification; protein ubiquitination. In terms of biological role, functions as an E3 ubiquitin ligase. This is U-box domain-containing protein 38 (PUB38) from Arabidopsis thaliana (Mouse-ear cress).